Here is a 170-residue protein sequence, read N- to C-terminus: Small ribosomal subunit protein uS5 (170 aa).

Residues 11 to 74 (ILEKLVHINR…ETARRVLIHV (64 aa)) form the S5 DRBM domain.

The protein belongs to the universal ribosomal protein uS5 family. As to quaternary structure, part of the 30S ribosomal subunit. Contacts proteins S4 and S8.

Its function is as follows. With S4 and S12 plays an important role in translational accuracy. Functionally, located at the back of the 30S subunit body where it stabilizes the conformation of the head with respect to the body. This Pelagibacter ubique (strain HTCC1062) protein is Small ribosomal subunit protein uS5.